A 143-amino-acid polypeptide reads, in one-letter code: Root meristem growth factor 10 (143 aa).

Residues 1–27 (MDMLRSACFYFLLIVFVILSWSLLCDS) form the signal peptide. Residues 28–130 (RHLGHMEKKL…SDQEHPGFNL (103 aa)) constitute a propeptide that is removed on maturation. Asparagine 60 is a glycosylation site (N-linked (GlcNAc...) asparagine). Positions 74–83 (NHGDNGQING) are enriched in polar residues. The tract at residues 74–143 (NHGDNGQING…QPTTHPPHHN (70 aa)) is disordered. A Nuclear localization signal motif is present at residues 92-99 (VKRASDKK). Tyrosine 132 bears the Sulfotyrosine mark. The residue at position 140 (proline 140) is a Hydroxyproline.

Belongs to the RGF family. Binds to LRR receptor-like serine/threonine-protein kinases RGI1, RGI2 and RGI3 to trigger their dimerization with SERK proteins and subsequent signaling. In terms of processing, the tyrosine sulfation is critical for the function of the peptide. As to expression, expressed in root tips.

Its subcellular location is the secreted. It is found in the nucleus. Maintains the postembryonic root stem cell niche by regulating the expression levels and patterns of the transcription factor PLETHORA (PLT), mainly at the post-transcriptional level. Promotes root elongation. In Arabidopsis thaliana (Mouse-ear cress), this protein is Root meristem growth factor 10.